Consider the following 386-residue polypeptide: Diaminopimelate decarboxylase (386 aa).

Lys46 bears the N6-(pyridoxal phosphate)lysine mark. Residues Gly214 and 246–249 contribute to the pyridoxal 5'-phosphate site; that span reads EIGR. Substrate-binding residues include Arg249, Arg285, and Tyr289. Cys314 acts as the Proton donor in catalysis. 2 residues coordinate substrate: Glu315 and Tyr343. Tyr343 is a pyridoxal 5'-phosphate binding site.

This sequence belongs to the Orn/Lys/Arg decarboxylase class-II family. LysA subfamily. As to quaternary structure, homodimer. It depends on pyridoxal 5'-phosphate as a cofactor.

The catalysed reaction is meso-2,6-diaminopimelate + H(+) = L-lysine + CO2. The protein operates within amino-acid biosynthesis; L-lysine biosynthesis via DAP pathway; L-lysine from DL-2,6-diaminopimelate: step 1/1. Its function is as follows. Specifically catalyzes the decarboxylation of meso-diaminopimelate (meso-DAP) to L-lysine. In Thermotoga maritima (strain ATCC 43589 / DSM 3109 / JCM 10099 / NBRC 100826 / MSB8), this protein is Diaminopimelate decarboxylase.